We begin with the raw amino-acid sequence, 485 residues long: Rhamnulokinase (485 aa).

An ATP-binding site is contributed by 8-12 (ASSGR). Residues glycine 78 and 231–233 (HDT) each bind substrate. Residue aspartate 232 is the Proton acceptor of the active site. Threonine 254 provides a ligand contact to ATP. Residue asparagine 291 participates in substrate binding. An ATP-binding site is contributed by glutamine 299. Cysteine 348 and cysteine 365 are disulfide-bonded. Position 397 (glycine 397) interacts with ATP. Residues cysteine 408 and cysteine 412 are joined by a disulfide bond.

It belongs to the rhamnulokinase family. Mg(2+) serves as cofactor.

The catalysed reaction is L-rhamnulose + ATP = L-rhamnulose 1-phosphate + ADP + H(+). Its pathway is carbohydrate degradation; L-rhamnose degradation; glycerone phosphate from L-rhamnose: step 2/3. Functionally, involved in the catabolism of L-rhamnose (6-deoxy-L-mannose). Catalyzes the transfer of the gamma-phosphate group from ATP to the 1-hydroxyl group of L-rhamnulose to yield L-rhamnulose 1-phosphate. The protein is Rhamnulokinase of Yersinia pestis bv. Antiqua (strain Antiqua).